The chain runs to 545 residues: Chaperonin GroEL (545 aa).

ATP-binding positions include 30–33 (TLGP), Lys51, 87–91 (DGTTT), Gly415, and Asp496.

This sequence belongs to the chaperonin (HSP60) family. Forms a cylinder of 14 subunits composed of two heptameric rings stacked back-to-back. Interacts with the co-chaperonin GroES.

Its subcellular location is the cytoplasm. It catalyses the reaction ATP + H2O + a folded polypeptide = ADP + phosphate + an unfolded polypeptide.. Functionally, together with its co-chaperonin GroES, plays an essential role in assisting protein folding. The GroEL-GroES system forms a nano-cage that allows encapsulation of the non-native substrate proteins and provides a physical environment optimized to promote and accelerate protein folding. The sequence is that of Chaperonin GroEL from Haemophilus influenzae (strain 86-028NP).